Reading from the N-terminus, the 424-residue chain is Protein pellino (424 aa).

The segment at 1 to 21 (MVKRTDGTESPILAEDGGDGH) is disordered. Ser10 carries the post-translational modification Phosphoserine.

It belongs to the pellino family. In terms of assembly, interacts with pll.

Its function is as follows. Scaffold protein involved in the Toll signaling pathway via its interaction with pelle/pll kinase. In Drosophila melanogaster (Fruit fly), this protein is Protein pellino (Pli).